Consider the following 206-residue polypeptide: Large ribosomal subunit protein eL13x (206 aa).

Residues 186–206 (NARHAGARAKRAAEAEKEEKK) form a disordered region. Basic and acidic residues predominate over residues 196 to 206 (RAAEAEKEEKK).

It belongs to the eukaryotic ribosomal protein eL13 family.

The protein is Large ribosomal subunit protein eL13x (RPL13D) of Arabidopsis thaliana (Mouse-ear cress).